The primary structure comprises 405 residues: Riboflavin biosynthesis protein RibBA (405 aa).

Positions 1–205 (MSEIQLNTIE…IKDLIAYRLR (205 aa)) are DHBP synthase. D-ribulose 5-phosphate is bound by residues 30–31 (RE), Asp35, 144–148 (RAGHT), and Glu168. Glu31 provides a ligand contact to Mg(2+). His147 provides a ligand contact to Mg(2+). The segment at 206–405 (TESIVENGVE…RMGHVLHNIK (200 aa)) is GTP cyclohydrolase II. GTP is bound at residue 256–260 (RVHSS). Cys261, Cys272, and Cys274 together coordinate Zn(2+). GTP contacts are provided by residues Gln277, 299–301 (EGR), and Thr321. Asp333 serves as the catalytic Proton acceptor; for GTP cyclohydrolase activity. The active-site Nucleophile; for GTP cyclohydrolase activity is the Arg335. Residues Ser356 and Lys361 each coordinate GTP.

This sequence in the N-terminal section; belongs to the DHBP synthase family. In the C-terminal section; belongs to the GTP cyclohydrolase II family. Requires Mg(2+) as cofactor. Mn(2+) serves as cofactor. The cofactor is Zn(2+).

The catalysed reaction is D-ribulose 5-phosphate = (2S)-2-hydroxy-3-oxobutyl phosphate + formate + H(+). It carries out the reaction GTP + 4 H2O = 2,5-diamino-6-hydroxy-4-(5-phosphoribosylamino)-pyrimidine + formate + 2 phosphate + 3 H(+). The protein operates within cofactor biosynthesis; riboflavin biosynthesis; 2-hydroxy-3-oxobutyl phosphate from D-ribulose 5-phosphate: step 1/1. It functions in the pathway cofactor biosynthesis; riboflavin biosynthesis; 5-amino-6-(D-ribitylamino)uracil from GTP: step 1/4. Functionally, catalyzes the conversion of D-ribulose 5-phosphate to formate and 3,4-dihydroxy-2-butanone 4-phosphate. In terms of biological role, catalyzes the conversion of GTP to 2,5-diamino-6-ribosylamino-4(3H)-pyrimidinone 5'-phosphate (DARP), formate and pyrophosphate. The polypeptide is Riboflavin biosynthesis protein RibBA (Parabacteroides distasonis (strain ATCC 8503 / DSM 20701 / CIP 104284 / JCM 5825 / NCTC 11152)).